A 381-amino-acid polypeptide reads, in one-letter code: Na(+)/H(+) antiporter NhaA 1 (381 aa).

A run of 11 helical transmembrane segments spans residues 18–38, 53–73, 89–109, 118–138, 147–167, 170–190, 210–230, 251–271, 283–303, 321–341, and 348–368; these read GLLL…SYSA, ITHW…GLEL, SLPI…FLAL, GAGI…SLLG, VFLT…IAVF, TSIG…LFVL, YFML…AFVI, PVAF…AIES, FGII…FSSI, ILGA…ITLL, and IIVF…ITGF.

Belongs to the NhaA Na(+)/H(+) (TC 2.A.33) antiporter family.

It is found in the cell inner membrane. It carries out the reaction Na(+)(in) + 2 H(+)(out) = Na(+)(out) + 2 H(+)(in). Functionally, na(+)/H(+) antiporter that extrudes sodium in exchange for external protons. The chain is Na(+)/H(+) antiporter NhaA 1 from Flavobacterium johnsoniae (strain ATCC 17061 / DSM 2064 / JCM 8514 / BCRC 14874 / CCUG 350202 / NBRC 14942 / NCIMB 11054 / UW101) (Cytophaga johnsonae).